A 218-amino-acid polypeptide reads, in one-letter code: Adenylate kinase (218 aa).

12–17 contacts ATP; the sequence is GAGKGT. Positions 32 to 61 are NMP; that stretch reads STGDIFRKNISENTPLGIEAKSYMDNGQLV. AMP-binding positions include threonine 33, arginine 38, 59 to 61, 87 to 90, and glutamine 94; these read QLV and GFPR. The tract at residues 128-165 is LID; the sequence is GRRVCPSCGASYHIKFNPPTNDGKCDLCGSDVIQRKDD. Arginine 129 is an ATP binding site. The Zn(2+) site is built by cysteine 132 and cysteine 135. 138–139 contacts ATP; that stretch reads SY. The Zn(2+) site is built by cysteine 152 and cysteine 155. Residues arginine 162 and arginine 173 each coordinate AMP. Glutamine 201 contacts ATP.

This sequence belongs to the adenylate kinase family. In terms of assembly, monomer.

The protein localises to the cytoplasm. It catalyses the reaction AMP + ATP = 2 ADP. It participates in purine metabolism; AMP biosynthesis via salvage pathway; AMP from ADP: step 1/1. Catalyzes the reversible transfer of the terminal phosphate group between ATP and AMP. Plays an important role in cellular energy homeostasis and in adenine nucleotide metabolism. In Clostridium perfringens (strain 13 / Type A), this protein is Adenylate kinase.